The primary structure comprises 732 residues: Protein DIA2 (732 aa).

TPR repeat units lie at residues 15–48 (VLKAIELGTRLFKSGEYLQAKRIFTNALRVCDSY), 78–111 (IKILDNICACYEKLNDLKSCLDVSQRLLKLEPGN), and 113–145 (KCYIRCTRTLIKLKDWKRAYKTCSRGLQLCNND). Residues 204–251 (TDLVGNLPIEILPIIFQRFTTKELVTLSLVCNKWRDKILYHLDCFQEF) form the F-box domain. Ser393 is subject to Phosphoserine. LRR repeat units follow at residues 425-449 (LEKITLICDKKKIKNFPLCRALLRG), 480-505 (FPDLKELWIEDNDNCELSKFLQLLKF), 509-532 (WKNLEKLTFRENKLYPIVNLDEDQ), 550-574 (LQNLEKLDLMGTSISGSALTRLCEQ), 579-602 (GRKLRSLNIGNCPNIQFPNNHAHT), 616-637 (LSKLEEINLSHLSSLNDSTMKS), and 645-669 (LENLKRLDISHNFEITGISIYEFLK).

Belongs to the DIA2 family. In terms of assembly, component of the SCF(DIA2) complex containing CDC53, SKP1, RBX1 and DIA2. Interacts with SKP1.

The protein localises to the nucleus. Functionally, F-box protein component of a SCF (SKP1-CUL1-F-box protein) E3 ubiquitin-protein ligase complex which mediates the ubiquitination and subsequent proteasomal degradation of target proteins. Probably recognizes and binds to phosphorylated target proteins. The SCF(DIA2) complex is specifically involved in the pheromone induced degradation of phosphorylated TEC1. The SCF(DIA2) complex binds to DNA replication origins. Involved in DNA replication, genome stability, and the control of cell cycle, probably through its association to replication origins to facilitate the ubiquitination of another origin-binding protein. Required for invasive growth and growth under alkaline conditions. In Saccharomyces cerevisiae (strain ATCC 204508 / S288c) (Baker's yeast), this protein is Protein DIA2 (DIA2).